A 492-amino-acid polypeptide reads, in one-letter code: Steroid 21-hydroxylase (492 aa).

Positions 92 and 121 each coordinate heme b. A 17alpha-hydroxyprogesterone-binding site is contributed by Arg232. Arg232 provides a ligand contact to progesterone. 3 residues coordinate heme b: His364, Arg425, and Cys427.

It belongs to the cytochrome P450 family. The cofactor is heme b.

The protein resides in the endoplasmic reticulum membrane. It is found in the microsome membrane. The catalysed reaction is progesterone + reduced [NADPH--hemoprotein reductase] + O2 = 21-hydroxyprogesterone + oxidized [NADPH--hemoprotein reductase] + H2O + H(+). The enzyme catalyses 17alpha-hydroxyprogesterone + reduced [NADPH--hemoprotein reductase] + O2 = 11-deoxycortisol + oxidized [NADPH--hemoprotein reductase] + H2O + H(+). Its function is as follows. A cytochrome P450 monooxygenase that plays a major role in adrenal steroidogenesis. Catalyzes the hydroxylation at C-21 of progesterone and 17alpha-hydroxyprogesterone to respectively form 11-deoxycorticosterone and 11-deoxycortisol, intermediate metabolites in the biosynthetic pathway of mineralocorticoids and glucocorticoids. Mechanistically, uses molecular oxygen inserting one oxygen atom into a substrate, and reducing the second into a water molecule, with two electrons provided by NADPH via cytochrome P450 reductase (CPR; NADPH-ferrihemoprotein reductase). The chain is Steroid 21-hydroxylase (CYP21) from Sus scrofa (Pig).